The following is a 157-amino-acid chain: Small ribosomal subunit protein uS7 (157 aa).

This sequence belongs to the universal ribosomal protein uS7 family. Part of the 30S ribosomal subunit. Contacts proteins S9 and S11.

One of the primary rRNA binding proteins, it binds directly to 16S rRNA where it nucleates assembly of the head domain of the 30S subunit. Is located at the subunit interface close to the decoding center, probably blocks exit of the E-site tRNA. The polypeptide is Small ribosomal subunit protein uS7 (Salinibacter ruber (strain DSM 13855 / M31)).